Here is a 331-residue protein sequence, read N- to C-terminus: N-arachidonyl glycine receptor (331 aa).

Residues 1–26 (MITLNNQDQPVPFNNSYPDEYEIAAL) are Extracellular-facing. Residue N14 is glycosylated (N-linked (GlcNAc...) asparagine). Residues 27–47 (VFYSCIFIIGLFVNITALWVF) form a helical membrane-spanning segment. Residues 48–56 (SCTTKKRTT) are Cytoplasmic-facing. A helical transmembrane segment spans residues 57–77 (VTIYMMNVALVDLIFIMTLPF). Residues 78-95 (RMFYYAKDEWPFGEYFCQ) lie on the Extracellular side of the membrane. C94 and C172 are disulfide-bonded. The chain crosses the membrane as a helical span at residues 96–116 (ILGALTVFYPSIALWLLAFIS). Residues 117–138 (ADRYMAIVQPKYAKELKNTCKA) are Cytoplasmic-facing. Residues 139–159 (VLACVGVWIMTLTTTIPLLLL) form a helical membrane-spanning segment. The Extracellular portion of the chain corresponds to 160-191 (HKDPDKDSTPATCLKISDIVYLKAVNVLNFTR). Residue N188 is glycosylated (N-linked (GlcNAc...) asparagine). Residues 192–212 (LTFFFLIPLFIMIGCYLVIIH) form a helical membrane-spanning segment. At 213–232 (NLLHGRTSKLKPKVKEKSIR) the chain is on the cytoplasmic side. The chain crosses the membrane as a helical span at residues 233-253 (IIITLLVQVLVCFMPFHICFA). At 254–268 (FLMLGTGENSYSPWG) the chain is on the extracellular side. The helical transmembrane segment at 269–289 (AFTTFLMNLSTCLDVILYYIV) threads the bilayer. Residues 290 to 331 (SKQFQARVISVMLYRNYLRGMRRKSFRSGSLRSLSNINSEML) are Cytoplasmic-facing. The residue at position 322 (S322) is a Phosphoserine.

The protein belongs to the G-protein coupled receptor 1 family.

Its subcellular location is the cell membrane. It localises to the cytoplasmic vesicle membrane. Its function is as follows. G protein-coupled receptor (GPCR) that plays a role in diverse physiological processes particularly within the immune and nervous systems. Becomes active when triggered by various endogenous ligands including endocannabinoid N-arachidonyl glycine (NAGly), delta-9-tetrahydrocannabinol or resolvin D2/RvD2 derived from the omega-3 fatty acid docosahexaenoic acid (DHA). Upon RvD2 binding, facilitates the resolution of inflammation, aiding in tissue repair and homeostasis. Mechanistically, RvD2 ligation initiates Galphas protein coupling, activation of cAMP-PKA signaling pathway and phosphorylation of STAT3, leading to RvD2-stimulated macrophage phagocytosis. Mediates NAGly-induced process of reorganization of actin filaments and induction of acrosomal exocytosis. Activation by N-arachidonoyl glycine (NAGly) can also induce apoptosis in macrophages. Plays a role in homeostasis of CD8+ subsets of intraepithelial lymphocytes (IELs) (CD8alphaalpha and CD8alphabeta IELs) in small intestine by supporting preferential migration of CD8alphaalpha T-cells to intraepithelial compartment over lamina propria compartment, and by mediating their reconstitution into small intestine after bone marrow transplant. Participates also in hypotensive responses, mediating reduction in intraocular and blood pressure. The sequence is that of N-arachidonyl glycine receptor from Macaca fascicularis (Crab-eating macaque).